The following is a 385-amino-acid chain: MTSTIGLGMPTAPAAVLAPRRKTRQLMVGSVGVGSDHPVSVQSMTTTKTHDVNATLQQIAQLTASGCDIVRVACPRQEDADALATIAKKSQIPVIADIHFQPRYIFAAIDAGCAAVRVNPGNIKEFDGRVKEVAKAAGAAGIPIRIGVNAGSLDKRMLEKYGKATPEALVESALWEASLFEEHGFGDIKISVKHNDPVIMVEAYRQLAAQCDYPLHLGVTEAGPAFQGTIKSAVAFGALLSEGIGDTIRVSLSAPPVEEVKVGTQILQSLNLRPRKLEIVSCPSCGRAQVDVYTLANEVTAGLEGMEVPLRVAVMGCVVNGPGEAREADLGVASGNGKGQIFVKGQVIKTVPEHQIVETLIEEAMRIAEEMGEQAGSGEPVVTVS.

[4Fe-4S] cluster contacts are provided by Cys282, Cys285, Cys317, and Glu324.

It belongs to the IspG family. [4Fe-4S] cluster is required as a cofactor.

The enzyme catalyses (2E)-4-hydroxy-3-methylbut-2-enyl diphosphate + oxidized [flavodoxin] + H2O + 2 H(+) = 2-C-methyl-D-erythritol 2,4-cyclic diphosphate + reduced [flavodoxin]. It functions in the pathway isoprenoid biosynthesis; isopentenyl diphosphate biosynthesis via DXP pathway; isopentenyl diphosphate from 1-deoxy-D-xylulose 5-phosphate: step 5/6. Converts 2C-methyl-D-erythritol 2,4-cyclodiphosphate (ME-2,4cPP) into 1-hydroxy-2-methyl-2-(E)-butenyl 4-diphosphate. The sequence is that of 4-hydroxy-3-methylbut-2-en-1-yl diphosphate synthase (flavodoxin) from Nocardia farcinica (strain IFM 10152).